Reading from the N-terminus, the 4544-residue chain is Prolow-density lipoprotein receptor-related protein 1 (4544 aa).

Positions 1 to 19 are cleaved as a signal peptide; sequence MLTPPLLLLLPLLSALVAA. Over 20–4419 the chain is Extracellular; it reads AIDAPKTCSP…EHVFSQQQPG (4400 aa). 2 LDL-receptor class A domains span residues 25-66 and 70-110; these read KTCS…ICPQ and QRCQ…HCRE. Intrachain disulfides connect Cys27–Cys40, Cys34–Cys53, Cys47–Cys64, Cys72–Cys85, Cys79–Cys98, and Cys92–Cys108. An EGF-like 1 domain is found at 111-149; it reads LQGNCSRLGCQHHCVPTLDGPTCYCNSSFQLQADGKTCK. Asn114 carries N-linked (GlcNAc...) asparagine glycosylation. 6 cysteine pairs are disulfide-bonded: Cys115-Cys124, Cys120-Cys133, Cys135-Cys148, Cys154-Cys164, Cys160-Cys173, and Cys175-Cys188. A glycan (N-linked (GlcNAc...) asparagine) is linked at Asn136. The EGF-like 2; calcium-binding domain occupies 150–189; sequence DFDECSVYGTCSQLCTNTDGSFICGCVEGYLLQPDNRSCK. N-linked (GlcNAc...) asparagine glycosylation is found at Asn185, Asn239, and Asn274. LDL-receptor class B repeat units lie at residues 292-334, 335-378, and 379-422; these read GNFY…DPAM, GKVF…DLVS, and RLVY…FENY. An N-linked (GlcNAc...) asparagine glycan is attached at Asn357. Asn446 carries an N-linked (GlcNAc...) asparagine glycan. The region spanning 474–520 is the EGF-like 3 domain; it reads RSHACENDQYGKPGGCSDICLLANSHKARTCRCRSGFSLGSDGKSCK. 3 disulfide bridges follow: Cys478/Cys493, Cys489/Cys504, and Cys506/Cys519. 4 LDL-receptor class B repeats span residues 571–613, 614–659, 660–710, and 711–754; these read GFIY…DWMG, DNLY…DPLN, GWMY…DIPA, and GRLY…HGNY. A glycan (N-linked (GlcNAc...) (complex) asparagine) is linked at Asn729. The EGF-like 4 domain maps to 803-843; that stretch reads GTNKCRVNNGGCSSLCLATPGSRQCACAEDQVLDADGVTCL. 33 disulfides stabilise this stretch: Cys807/Cys818, Cys814/Cys827, Cys829/Cys842, Cys854/Cys866, Cys861/Cys879, Cys873/Cys890, Cys895/Cys907, Cys902/Cys920, Cys914/Cys931, Cys936/Cys948, Cys943/Cys961, Cys955/Cys971, Cys976/Cys989, Cys984/Cys1002, Cys996/Cys1011, Cys1015/Cys1027, Cys1022/Cys1040, Cys1034/Cys1051, Cys1062/Cys1075, Cys1069/Cys1088, Cys1082/Cys1097, Cys1104/Cys1118, Cys1112/Cys1131, Cys1125/Cys1140, Cys1145/Cys1159, Cys1152/Cys1172, Cys1166/Cys1182, Cys1185/Cys1196, Cys1192/Cys1206, Cys1208/Cys1221, Cys1227/Cys1237, Cys1233/Cys1246, and Cys1248/Cys1261. 8 consecutive LDL-receptor class A domains span residues 852–892, 893–933, 934–973, 974–1013, 1013–1053, 1060–1099, 1102–1142, and 1143–1182; these read PQCQ…LCHQ, HTCP…TCSA, RTCPPNQFSCASGRCIPISWTCDLDDDCGDRSDESASCAY, PTCFPLTQFTCNNGRCININWRCDNDNDCGDNSDEAGCSH, HSCS…NCTN, GGCHTDEFQCRLDGLCIPLRWRCDGDTDCMDSSDEKSCEG, HVCD…NCES, and LACRPPSHPCANNTSVCLPPDKLCDGNDDCGDGSDEGELC. Positions 871, 874, 876, 878, 884, and 885 each coordinate Ca(2+). Asn928 is a glycosylation site (N-linked (GlcNAc...) asparagine). Residues Trp1032, Asp1035, Asp1037, Asp1039, Asp1045, and Glu1046 each coordinate Ca(2+). Asn1050 carries an N-linked (GlcNAc...) asparagine glycan. Ca(2+) contacts are provided by Trp1080, Asp1083, Asp1085, Asp1087, Asp1093, and Glu1094. N-linked (GlcNAc...) asparagine glycans are attached at residues Asn1154 and Asn1155. EGF-like domains lie at 1183-1222 and 1223-1262; these read DQCSLNNGGCSHNCSVAPGEGIVCSCPLGMELGPDNHTCQ and IQSYCAKHLKCSQKCDQNKFSVKCSCYEGWVLEPDGESCR. Asn1195 and Asn1218 each carry an N-linked (GlcNAc...) asparagine glycan. LDL-receptor class B repeat units lie at residues 1309–1355, 1356–1398, 1399–1445, 1446–1490, and 1491–1531; these read SALY…DWIA, GNIY…DPRD, GILF…DYLE, KRIL…YGGE, and VYWT…YHPS. N-linked (GlcNAc...) (complex) asparagine glycosylation occurs at Asn1511. The EGF-like 7 domain maps to 1536-1579; that stretch reads APNPCEANGGQGPCSHLCLINYNRTVSCACPHLMKLHKDNTTCY. 3 disulfide bridges follow: Cys1540-Cys1553, Cys1549-Cys1563, and Cys1565-Cys1578. 4 N-linked (GlcNAc...) asparagine glycosylation sites follow: Asn1558, Asn1575, Asn1616, and Asn1645. LDL-receptor class B repeat units follow at residues 1627 to 1669, 1670 to 1713, 1714 to 1753, and 1754 to 1798; these read QRVY…DWVS, RNLF…HPLR, GKLYWTDGDNISMANMDGSNRTLLFSGQKGPVGLAIDFPE, and SKLY…MGDK. 4 N-linked (GlcNAc...) asparagine glycosylation sites follow: Asn1723, Asn1733, Asn1763, and Asn1825. Residues 1846–1887 form the EGF-like 8 domain; it reads GTNPCSVNNGDCSQLCLPTSETTRSCMCTAGYSLRSGQQACE. Disulfide bonds link Cys1850/Cys1861, Cys1857/Cys1871, and Cys1873/Cys1886. A glycan (N-linked (GlcNAc...) asparagine) is linked at Asn1933. 4 LDL-receptor class B repeats span residues 1934–1976, 1977–2019, 2020–2063, and 2064–2107; these read DTIY…DWIA, GNIY…HPEK, GYLF…DYQD, and GKLY…FEDF. N-linked (GlcNAc...) asparagine glycosylation occurs at Asn1995. N6-acetyllysine is present on Lys2009. A glycan (N-linked (GlcNAc...) asparagine) is linked at Asn2048. N-linked (GlcNAc...) asparagine glycans are attached at residues Asn2117 and Asn2127. The region spanning 2155–2195 is the EGF-like 9 domain; it reads GTNVCAVANGGCQQLCLYRGRGQRACACAHGMLAEDGASCR. Disulfide bonds link Cys2159/Cys2170, Cys2166/Cys2180, and Cys2182/Cys2194. LDL-receptor class B repeat units lie at residues 2253-2294, 2295-2343, 2344-2388, 2389-2431, and 2432-2473; these read NRIF…HRGW, DTLY…DECQ, NLMF…DHRA, EKLY…YGEH, and IFWT…VAND. Residue Asn2472 is glycosylated (N-linked (GlcNAc...) asparagine). The region spanning 2478 to 2518 is the EGF-like 10 domain; it reads ELSPCRINNGGCQDLCLLTHQGHVNCSCRGGRILQDDLTCR. Intrachain disulfides connect Cys2482–Cys2493, Cys2489–Cys2503, and Cys2505–Cys2517. Asn2502 carries N-linked (GlcNAc...) asparagine glycosylation. Asn2521 carries an N-linked (GlcNAc...) asparagine glycan. LDL-receptor class A domains follow at residues 2522–2563, 2564–2602, 2603–2641, 2642–2690, 2694–2732, 2732–2771, and 2772–2814; these read SSCR…YCNS, RRCKKTFRQCSNGRCVSNMLWCNGADDCGDGSDEIPCNK, TACGVGEFRCRDGTCIGNSSRCNQFVDCEDASDEMNCSA, TDCS…DCPG, PRCPLNYFACPSGRCIPMSWTCDKEDDCEHGEDETHCNK, KFCSEAQFECQNHRCISKQWLCDGSDDCGDGSDEAAHCEG, and KTCG…GCLY. Disulfide bonds link Cys2524/Cys2537, Cys2532/Cys2550, Cys2544/Cys2561, Cys2566/Cys2578, Cys2573/Cys2591, and Cys2585/Cys2600. N-linked (GlcNAc...) asparagine glycosylation occurs at Asn2539. An N-linked (GlcNAc...) asparagine glycan is attached at Asn2601. 15 cysteine pairs are disulfide-bonded: Cys2605–Cys2617, Cys2612–Cys2630, Cys2624–Cys2639, Cys2644–Cys2666, Cys2660–Cys2679, Cys2673–Cys2688, Cys2696–Cys2708, Cys2703–Cys2721, Cys2715–Cys2730, Cys2734–Cys2746, Cys2741–Cys2759, Cys2753–Cys2769, Cys2774–Cys2787, Cys2781–Cys2800, and Cys2794–Cys2812. Residues Asn2620 and Asn2638 are each glycosylated (N-linked (GlcNAc...) asparagine). A glycan (N-linked (GlcNAc...) asparagine) is linked at Asn2815. 3 consecutive LDL-receptor class A domains span residues 2816–2855, 2856–2899, and 2902–2940; these read STCDDREFMCQNRQCIPKHFVCDHDRDCADGSDESPECEY, PTCG…HCTS, and HKCNASSQFLCSSGRCVAEALLCNGQDDCGDSSDERGCH. Cystine bridges form between Cys2818–Cys2830, Cys2825–Cys2843, Cys2837–Cys2853, Cys2858–Cys2870, Cys2865–Cys2884, Cys2878–Cys2897, Cys2904–Cys2917, Cys2912–Cys2930, Cys2924–Cys2939, Cys2944–Cys2956, Cys2952–Cys2965, Cys2967–Cys2980, Cys2986–Cys2996, Cys2992–Cys3005, and Cys3007–Cys3021. The N-linked (GlcNAc...) asparagine glycan is linked to Asn2905. In terms of domain architecture, EGF-like 11 spans 2941–2981; the sequence is INECLSRKLSGCSQDCEDLKIGFKCRCRPGFRLKDDGRTCA. In terms of domain architecture, EGF-like 12; calcium-binding spans 2982-3022; that stretch reads DVDECSTTFPCSQRCINTHGSYKCLCVEGYAPRGGDPHSCK. N-linked (GlcNAc...) asparagine glycans are attached at residues Asn3048 and Asn3089. LDL-receptor class B repeat units follow at residues 3069–3113, 3114–3156, 3157–3200, 3201–3243, and 3244–3284; these read QMIY…DWVG, GNLY…DVQN, GYLY…DYVT, ERIY…FEDY, and VYWT…FHAL. A glycan (N-linked (GlcNAc...) asparagine) is linked at Asn3264. Positions 3290 to 3331 constitute an EGF-like 13 domain; it reads PNHPCKVNNGGCSNLCLLSPGGGHKCACPTNFYLGSDGRTCV. 3 cysteine pairs are disulfide-bonded: Cys3294–Cys3305, Cys3301–Cys3315, and Cys3317–Cys3330. LDL-receptor class A domains are found at residues 3332 to 3371, 3372 to 3410, 3411 to 3450, 3451 to 3491, 3492 to 3533, 3534 to 3572, 3573 to 3611, 3611 to 3649, 3652 to 3692, 3693 to 3733, and 3739 to 3778; these read SNCTASQFVCKNDKCIPFWWKCDTEDDCGDHSDEPPDCPE, FKCRPGQFQCSTGICTNPAFICDGDNDCQDNSDEANCDI, HVCLPSQFKCTNTNRCIPGIFRCNGQDNCGDGEDERDCPE, VTCA…NCTQ, MTCG…ECDE, RTCEPYQFRCKNNRCVPGRWQCDYDNDCGDNSDEESCTP, RPCSESEFSCANGRCIAGRWKCDGDHDCADGSDEKDCTP, PRCDMDQFQCKSGHCIPLRWRCDADADCMDGSDEEACGT, RTCP…ECAR, FVCP…DCEP, and THCKDKKEFLCRNQRCLSSSLRCNMFDDCGDGSDEEDCSI. The N-linked (GlcNAc...) asparagine glycan is linked to Asn3333. 39 disulfide bridges follow: Cys3334–Cys3346, Cys3341–Cys3359, Cys3353–Cys3369, Cys3374–Cys3386, Cys3381–Cys3399, Cys3393–Cys3408, Cys3413–Cys3426, Cys3420–Cys3439, Cys3433–Cys3448, Cys3453–Cys3466, Cys3460–Cys3479, Cys3473–Cys3489, Cys3494–Cys3507, Cys3501–Cys3520, Cys3514–Cys3531, Cys3536–Cys3548, Cys3543–Cys3561, Cys3555–Cys3570, Cys3575–Cys3587, Cys3582–Cys3600, Cys3594–Cys3609, Cys3613–Cys3625, Cys3620–Cys3638, Cys3632–Cys3647, Cys3654–Cys3666, Cys3661–Cys3679, Cys3673–Cys3690, Cys3695–Cys3709, Cys3703–Cys3722, Cys3716–Cys3731, Cys3741–Cys3754, Cys3749–Cys3767, Cys3761–Cys3776, Cys3785–Cys3798, Cys3792–Cys3807, Cys3809–Cys3822, Cys3828–Cys3838, Cys3834–Cys3847, and Cys3849–Cys3860. Asn3488 is a glycosylation site (N-linked (GlcNAc...) asparagine). The N-linked (GlcNAc...) asparagine glycan is linked to Asn3662. EGF-like domains lie at 3781 to 3823 and 3824 to 3861; these read KLTS…PGCQ and DINECLRFGTCSQLCNNTKGGHLCSCARNFMKTHNTCK. Asn3788 carries N-linked (GlcNAc...) asparagine glycosylation. Asn3839 carries N-linked (GlcNAc...) asparagine glycosylation. LDL-receptor class B repeat units lie at residues 3912–3954, 3970–4012, 4013–4056, and 4057–4101; these read GRVY…HLNI, GNVY…DPLR, GTMY…DYHN, and ERLY…FEDY. Positions 3940-3943 match the Recognition site for proteolytical processing motif; it reads RHRR. An N-linked (GlcNAc...) asparagine glycan is attached at Asn3953. Residues Asn4075 and Asn4125 are each glycosylated (N-linked (GlcNAc...) asparagine). 7 EGF-like domains span residues 4147-4183, 4196-4232, 4232-4268, 4268-4304, 4304-4340, 4340-4375, and 4373-4409; these read VTNPCDRKKCEWLCLLSPSGPVCTCPNGKRLDNGTCV, RPGTCNLQCFNGGSCFLNARRQPKCRCQPRYTGDKCE, ELDQCWEHCRNGGTCAASPSGMPTCRCPTGFTGPKCT, TQQVCAGYCANNSTCTVNQGNQPQCRCLPGFLGDRCQ, QYRQCSGYCENFGTCQMAADGSRQCRCTAYFEGSRCE, EVNKCSRCLEGACVVNKQSGDVTCNCTDGRVAPSCL, and SCLTCVGHCSNGGSCTMNSKMMPECQCPPHMTGPRCE. Cystine bridges form between Cys4151–Cys4160, Cys4156–Cys4169, Cys4171–Cys4182, Cys4200–Cys4210, Cys4204–Cys4220, Cys4222–Cys4231, Cys4236–Cys4246, Cys4240–Cys4256, Cys4258–Cys4267, Cys4272–Cys4282, Cys4276–Cys4292, Cys4294–Cys4303, Cys4308–Cys4318, Cys4312–Cys4328, Cys4330–Cys4339, Cys4344–Cys4352, and Cys4347–Cys4363. The N-linked (GlcNAc...) asparagine glycan is linked to Asn4179. 2 N-linked (GlcNAc...) asparagine glycosylation sites follow: Asn4278 and Asn4279. Asn4364 is a glycosylation site (N-linked (GlcNAc...) asparagine). Cystine bridges form between Cys4365/Cys4374, Cys4377/Cys4387, Cys4381/Cys4397, and Cys4399/Cys4408. Residues 4420–4444 form a helical membrane-spanning segment; that stretch reads HIASILIPLLLLLLLVLVAGVVFWY. Residues 4445–4544 are Cytoplasmic-facing; sequence KRRVQGAKGF…PEDEIGDPLA (100 aa). Positions 4445–4544 are interaction with MAFB; the sequence is KRRVQGAKGF…PEDEIGDPLA (100 aa). At Thr4460 the chain carries Phosphothreonine. Residues 4502 to 4507 carry the NPXY motif motif; that stretch reads FTNPVY. The residue at position 4507 (Tyr4507) is a Phosphotyrosine. 3 positions are modified to phosphoserine: Ser4517, Ser4520, and Ser4523.

It belongs to the LDLR family. Heterodimer of an 85-kDa membrane-bound carboxyl subunit and a non-covalently attached 515-kDa N-terminal subunit. Intracellular domain interacts with MAFB. Found in a complex with PID1/PCLI1, LRP1 and CUBNI. Interacts with SNX17, PID1/PCLI1, PDGF and CUBN. The intracellular domain interacts with SHC1, GULP1 and DAB1. Can weakly interact (via NPXY motif) with DAB2 (via PID domain); the interaction is enhanced by tyrosine phosphorylation of the NPXY motif. Interacts with MDK; promotes neuronal survival. Interacts with LRPAP1; this interaction is followed by rapid internalization. Interacts with uPA/PLAU and PAI1/SERPINE1, either individually or in complex with each other, leading to rapid endocytosis; this interaction is abolished in the presence of LRPAP1/RAP. Also interacts with tPA/PLAT alone or in complex with SERPINE1. Interacts with the urokinase receptor PLAUR; this interaction leads to PLAUR internalization and is impaired in the presence of SORL1. Interacts with PDGFB. Interacts with TAU/MAPT, leading to endocytosis; this interaction is reduced in the presence of LRPAP1/RAP. Interacts with IGFBP3; this interaction mediates cell growth inhibition independently of IGF1. Interacts with ADGRG6. As to quaternary structure, (Microbial infection) Interacts with bacterial exotoxins. In terms of assembly, (Microbial infection) Interacts with Rift valley fever virus (RVFV) glycoprotein N; this interaction facilitates virus entry. Cleaved into a 85 kDa membrane-spanning subunit (LRP-85) and a 515 kDa large extracellular domain (LRP-515) that remains non-covalently associated. Gamma-secretase-dependent cleavage of LRP-85 releases the intracellular domain from the membrane. Post-translationally, the N-terminus is blocked. In terms of processing, phosphorylated on serine and threonine residues. Phosphorylated on tyrosine residues upon stimulation with PDGF. Tyrosine phosphorylation promotes interaction with SHC1. In terms of tissue distribution, most abundant in liver, brain and lung.

Its subcellular location is the cell membrane. It is found in the membrane. The protein resides in the coated pit. The protein localises to the cytoplasm. It localises to the nucleus. Its subcellular location is the golgi outpost. It is found in the cytoskeleton. The protein resides in the microtubule organizing center. In terms of biological role, endocytic receptor involved in endocytosis and in phagocytosis of apoptotic cells. Required for early embryonic development. Involved in cellular lipid homeostasis. Involved in the plasma clearance of chylomicron remnants and activated LRPAP1 (alpha 2-macroglobulin), as well as the local metabolism of complexes between plasminogen activators and their endogenous inhibitors. Acts as an LRPAP1 alpha-2-macroglobulin receptor. Acts as TAU/MAPT receptor and controls the endocytosis of TAU/MAPT as well as its subsequent spread. May modulate cellular events, such as APP metabolism, kinase-dependent intracellular signaling, neuronal calcium signaling as well as neurotransmission. Also acts as a receptor for IGFBP3 to mediate cell growth inhibition. Functionally, (Microbial infection) Functions as a receptor for Pseudomonas aeruginosa exotoxin A. The polypeptide is Prolow-density lipoprotein receptor-related protein 1 (Homo sapiens (Human)).